The primary structure comprises 420 residues: MSQEATIIAVDNSDYMRNGDFFPTRLQAQNDAVGLICQSKRQRNPENTIGLLSLANTEVLCTLTNDVSKIYNRLHLVEPKGRIIFCSSIRIAHLALRHRQLRHQKMRIVCFIGSPILEDEKELTRLAKRLKKEKVNVDIINFGENETNEQKLSEFIDTLNGKDGTGSHLISVAPGTVLHDTLMTSPVVAGEDGSGMAGAGLGLEFGLDGAEDPDLLYALRVSMEDQRMRQEHEVNGDGSNTSVVATSLPAGSGTSEEAMLQQALAMSMQMNNTESSSLPMDIDLAAMSEEDQIAYALRMSLQQMGEETTQPTTTTLESDKTIVEPSGVAMDIDQTPTKVTENPNLSSSSGTLAAATSAVPTSADLDVMYDAEFLESVLQSLPGVDTQNEDVRKAINALTKSQSQRGSKKDEKEDEDKQNS.

The region spanning 1-174 is the VWFA domain; that stretch reads MSQEATIIAV…TGSHLISVAP (174 aa). UIM domains are found at residues 210–229, 255–274, and 288–307; these read AEDPDLLYALRVSMEDQRMR, SEEAMLQQALAMSMQMNNTE, and SEEDQIAYALRMSLQQMGEE. Positions 392 to 420 are disordered; sequence RKAINALTKSQSQRGSKKDEKEDEDKQNS. Positions 407-420 are enriched in basic and acidic residues; it reads SKKDEKEDEDKQNS.

It belongs to the proteasome subunit S5A family. As to quaternary structure, the 26S proteasome is composed of a core protease, known as the 20S proteasome, capped at one or both ends by the 19S regulatory complex (RC). The RC is composed of at least 18 different subunits in two subcomplexes, the base and the lid, which form the portions proximal and distal to the 20S proteolytic core, respectively.

In terms of biological role, binds and presumably selects ubiquitin-conjugates for destruction. The sequence is that of 26S proteasome non-ATPase regulatory subunit 4 from Schistosoma mansoni (Blood fluke).